The chain runs to 49 residues: Large ribosomal subunit protein bL33 (49 aa).

It belongs to the bacterial ribosomal protein bL33 family.

This chain is Large ribosomal subunit protein bL33, found in Streptococcus gordonii (strain Challis / ATCC 35105 / BCRC 15272 / CH1 / DL1 / V288).